A 115-amino-acid chain; its full sequence is Large ribosomal subunit protein uL24 (115 aa).

This sequence belongs to the universal ribosomal protein uL24 family. In terms of assembly, part of the 50S ribosomal subunit.

One of two assembly initiator proteins, it binds directly to the 5'-end of the 23S rRNA, where it nucleates assembly of the 50S subunit. Its function is as follows. One of the proteins that surrounds the polypeptide exit tunnel on the outside of the subunit. In Aster yellows witches'-broom phytoplasma (strain AYWB), this protein is Large ribosomal subunit protein uL24.